We begin with the raw amino-acid sequence, 199 residues long: Holliday junction branch migration complex subunit RuvA (199 aa).

The domain I stretch occupies residues 1–62 (MIAYIKGLLA…EDGIQFFGFA (62 aa)). Positions 63–141 (KEDEKECFLL…GMAAVEHSTL (79 aa)) are domain II. The tract at residues 142–152 (QQSVITTGSGD) is flexible linker. A domain III region spans residues 152–199 (DEAVEALLALGYSQGEARDAVKKAQKSAPEEDLSALIKIALKELAPSR).

The protein belongs to the RuvA family. As to quaternary structure, homotetramer. Forms an RuvA(8)-RuvB(12)-Holliday junction (HJ) complex. HJ DNA is sandwiched between 2 RuvA tetramers; dsDNA enters through RuvA and exits via RuvB. An RuvB hexamer assembles on each DNA strand where it exits the tetramer. Each RuvB hexamer is contacted by two RuvA subunits (via domain III) on 2 adjacent RuvB subunits; this complex drives branch migration. In the full resolvosome a probable DNA-RuvA(4)-RuvB(12)-RuvC(2) complex forms which resolves the HJ.

The protein localises to the cytoplasm. Its function is as follows. The RuvA-RuvB-RuvC complex processes Holliday junction (HJ) DNA during genetic recombination and DNA repair, while the RuvA-RuvB complex plays an important role in the rescue of blocked DNA replication forks via replication fork reversal (RFR). RuvA specifically binds to HJ cruciform DNA, conferring on it an open structure. The RuvB hexamer acts as an ATP-dependent pump, pulling dsDNA into and through the RuvAB complex. HJ branch migration allows RuvC to scan DNA until it finds its consensus sequence, where it cleaves and resolves the cruciform DNA. The protein is Holliday junction branch migration complex subunit RuvA of Desulforamulus reducens (strain ATCC BAA-1160 / DSM 100696 / MI-1) (Desulfotomaculum reducens).